A 242-amino-acid chain; its full sequence is tRNA (guanine-N(1)-)-methyltransferase (242 aa).

Residues Gly-114 and 134 to 139 (IGDFVL) contribute to the S-adenosyl-L-methionine site. The span at 223 to 233 (RRDLLPEHSKN) shows a compositional bias: basic and acidic residues. The segment at 223-242 (RRDLLPEHSKNNPEQTNKLS) is disordered.

It belongs to the RNA methyltransferase TrmD family. In terms of assembly, homodimer.

Its subcellular location is the cytoplasm. The enzyme catalyses guanosine(37) in tRNA + S-adenosyl-L-methionine = N(1)-methylguanosine(37) in tRNA + S-adenosyl-L-homocysteine + H(+). Specifically methylates guanosine-37 in various tRNAs. The polypeptide is tRNA (guanine-N(1)-)-methyltransferase (Rhodopirellula baltica (strain DSM 10527 / NCIMB 13988 / SH1)).